The following is a 443-amino-acid chain: ATP-dependent protease ATPase subunit HslU (443 aa).

ATP is bound by residues I18, 60-65 (GVGKTE), D256, E321, and R393.

It belongs to the ClpX chaperone family. HslU subfamily. As to quaternary structure, a double ring-shaped homohexamer of HslV is capped on each side by a ring-shaped HslU homohexamer. The assembly of the HslU/HslV complex is dependent on binding of ATP.

It localises to the cytoplasm. Its function is as follows. ATPase subunit of a proteasome-like degradation complex; this subunit has chaperone activity. The binding of ATP and its subsequent hydrolysis by HslU are essential for unfolding of protein substrates subsequently hydrolyzed by HslV. HslU recognizes the N-terminal part of its protein substrates and unfolds these before they are guided to HslV for hydrolysis. The polypeptide is ATP-dependent protease ATPase subunit HslU (Salmonella agona (strain SL483)).